A 954-amino-acid chain; its full sequence is Glycine dehydrogenase (decarboxylating) (954 aa).

Residue Lys-700 is modified to N6-(pyridoxal phosphate)lysine.

Belongs to the GcvP family. In terms of assembly, the glycine cleavage system is composed of four proteins: P, T, L and H. It depends on pyridoxal 5'-phosphate as a cofactor.

The enzyme catalyses N(6)-[(R)-lipoyl]-L-lysyl-[glycine-cleavage complex H protein] + glycine + H(+) = N(6)-[(R)-S(8)-aminomethyldihydrolipoyl]-L-lysyl-[glycine-cleavage complex H protein] + CO2. Functionally, the glycine cleavage system catalyzes the degradation of glycine. The P protein binds the alpha-amino group of glycine through its pyridoxal phosphate cofactor; CO(2) is released and the remaining methylamine moiety is then transferred to the lipoamide cofactor of the H protein. The protein is Glycine dehydrogenase (decarboxylating) of Dinoroseobacter shibae (strain DSM 16493 / NCIMB 14021 / DFL 12).